Here is a 218-residue protein sequence, read N- to C-terminus: MKNERALVVFSGGQDSTTCLFQALADYSEVEVVTFNYGQRHAAELDVAREITSELGVKHHELDLSLLSQLTSNSLTDHSQSITTNEDGLPSTFVDGRNHLFLSFAAVLAKGRGIRHIITGVCETDFSGYPDCRDSFIKSLNVTLNLAMDYPFVIHTPLMWLDKKETWALADSLGAFDFVRKRTLTCYNGIIGDGCGDCPACELRKKGLDAYIEEVQHT.

10-20 (FSGGQDSTTCL) contributes to the ATP binding site. Zn(2+)-binding residues include C186, C195, C198, and C201.

The protein belongs to the QueC family. Homodimer. Zn(2+) is required as a cofactor.

It carries out the reaction 7-carboxy-7-deazaguanine + NH4(+) + ATP = 7-cyano-7-deazaguanine + ADP + phosphate + H2O + H(+). It participates in purine metabolism; 7-cyano-7-deazaguanine biosynthesis. Functionally, catalyzes the ATP-dependent conversion of 7-carboxy-7-deazaguanine (CDG) to 7-cyano-7-deazaguanine (preQ(0)). The chain is 7-cyano-7-deazaguanine synthase from Exiguobacterium sibiricum (strain DSM 17290 / CCUG 55495 / CIP 109462 / JCM 13490 / 255-15).